The sequence spans 560 residues: Hypermethylated in cancer 2 protein (560 aa).

The BTB domain occupies 24-87; the sequence is CDVIIVVENA…IYTGKLLSSD (64 aa). Disordered regions lie at residues 122–163 and 183–367; these read RSLL…KTKR and HCTT…GGRN. Composition is skewed to polar residues over residues 126 to 153 and 183 to 203; these read NKPT…NQMS and HCTT…NGSC. The span at 224-242 shows a compositional bias: low complexity; the sequence is EEVSPSSIPQESPQSASES. Residues 243–259 are compositionally biased toward polar residues; sequence TANSASFDENPNTQNLT. Over residues 296-308 the composition is skewed to basic and acidic residues; the sequence is PKSEGKKGEDMER. The span at 348–362 shows a compositional bias: low complexity; that stretch reads ENGQEQSEESGQSEN. C2H2-type zinc fingers lie at residues 387–409, 450–472, 478–500, 506–528, and 534–556; these read YVCI…VETH, FSCS…EKTH, FPCN…MRSH, FACE…MRVH, and YECQ…LRMH.

The protein belongs to the krueppel C2H2-type zinc-finger protein family. Hic subfamily.

It is found in the nucleus. Functionally, transcriptional repressor. The polypeptide is Hypermethylated in cancer 2 protein (hic2) (Danio rerio (Zebrafish)).